The chain runs to 61 residues: Photosystem II reaction center protein K (61 aa).

The propeptide occupies 1–24 (MINIFSFICIYLHSALYSSSFFFG). A helical membrane pass occupies residues 40-60 (MPVIPLFFFLLAFVWQAAVSF).

The protein belongs to the PsbK family. As to quaternary structure, PSII is composed of 1 copy each of membrane proteins PsbA, PsbB, PsbC, PsbD, PsbE, PsbF, PsbH, PsbI, PsbJ, PsbK, PsbL, PsbM, PsbT, PsbX, PsbY, PsbZ, Psb30/Ycf12, at least 3 peripheral proteins of the oxygen-evolving complex and a large number of cofactors. It forms dimeric complexes.

It localises to the plastid. It is found in the chloroplast thylakoid membrane. Its function is as follows. One of the components of the core complex of photosystem II (PSII). PSII is a light-driven water:plastoquinone oxidoreductase that uses light energy to abstract electrons from H(2)O, generating O(2) and a proton gradient subsequently used for ATP formation. It consists of a core antenna complex that captures photons, and an electron transfer chain that converts photonic excitation into a charge separation. The chain is Photosystem II reaction center protein K from Pelargonium hortorum (Common geranium).